The following is a 147-amino-acid chain: Large ribosomal subunit protein uL15 (147 aa).

Residues 1–28 (MIRRRKKVRKLRGSHTHGWGCKKKHRGG) are compositionally biased toward basic residues. Residues 1 to 43 (MIRRRKKVRKLRGSHTHGWGCKKKHRGGGSKGGRGMAGTGKRN) form a disordered region. Positions 29-38 (GSKGGRGMAG) are enriched in gly residues.

It belongs to the universal ribosomal protein uL15 family. As to quaternary structure, part of the 50S ribosomal subunit.

Binds to the 23S rRNA. In Pyrococcus furiosus (strain ATCC 43587 / DSM 3638 / JCM 8422 / Vc1), this protein is Large ribosomal subunit protein uL15.